A 298-amino-acid polypeptide reads, in one-letter code: Bifunctional protein FolD (298 aa).

Residues 166-168, Ser-195, and Ile-236 contribute to the NADP(+) site; that span reads GRS.

This sequence belongs to the tetrahydrofolate dehydrogenase/cyclohydrolase family. As to quaternary structure, homodimer.

The catalysed reaction is (6R)-5,10-methylene-5,6,7,8-tetrahydrofolate + NADP(+) = (6R)-5,10-methenyltetrahydrofolate + NADPH. The enzyme catalyses (6R)-5,10-methenyltetrahydrofolate + H2O = (6R)-10-formyltetrahydrofolate + H(+). The protein operates within one-carbon metabolism; tetrahydrofolate interconversion. Catalyzes the oxidation of 5,10-methylenetetrahydrofolate to 5,10-methenyltetrahydrofolate and then the hydrolysis of 5,10-methenyltetrahydrofolate to 10-formyltetrahydrofolate. This Chlorobium phaeobacteroides (strain BS1) protein is Bifunctional protein FolD.